Here is a 931-residue protein sequence, read N- to C-terminus: Phosphoenolpyruvate carboxylase (931 aa).

Residues His-158 and Lys-593 contribute to the active site.

This sequence belongs to the PEPCase type 1 family. Requires Mg(2+) as cofactor.

The enzyme catalyses oxaloacetate + phosphate = phosphoenolpyruvate + hydrogencarbonate. Its function is as follows. Forms oxaloacetate, a four-carbon dicarboxylic acid source for the tricarboxylic acid cycle. This Azorhizobium caulinodans (strain ATCC 43989 / DSM 5975 / JCM 20966 / LMG 6465 / NBRC 14845 / NCIMB 13405 / ORS 571) protein is Phosphoenolpyruvate carboxylase.